The primary structure comprises 270 residues: Putative pyruvate, phosphate dikinase regulatory protein (270 aa).

Gly151–Thr158 is a binding site for ADP.

The protein belongs to the pyruvate, phosphate/water dikinase regulatory protein family. PDRP subfamily.

The enzyme catalyses N(tele)-phospho-L-histidyl/L-threonyl-[pyruvate, phosphate dikinase] + ADP = N(tele)-phospho-L-histidyl/O-phospho-L-threonyl-[pyruvate, phosphate dikinase] + AMP + H(+). The catalysed reaction is N(tele)-phospho-L-histidyl/O-phospho-L-threonyl-[pyruvate, phosphate dikinase] + phosphate + H(+) = N(tele)-phospho-L-histidyl/L-threonyl-[pyruvate, phosphate dikinase] + diphosphate. Bifunctional serine/threonine kinase and phosphorylase involved in the regulation of the pyruvate, phosphate dikinase (PPDK) by catalyzing its phosphorylation/dephosphorylation. The chain is Putative pyruvate, phosphate dikinase regulatory protein from Streptococcus gordonii (strain Challis / ATCC 35105 / BCRC 15272 / CH1 / DL1 / V288).